The primary structure comprises 169 residues: MQNTIRIIGIDPGLRRTGWGIIDTLGNSLKFVASGTVTSDGEMDLASRLCQLHDGLADIVHAHKPDEAAVEQTFVNKDAVATLKLGQARGIAMLVPARAGLPVSEYAPNAVKKAVIGVGHGEKQQIHMMLKILMPKAEFKGDDAADALAIAICHAHNRGGHRMRQALAG.

Residues Asp-11, Glu-71, and Asp-143 contribute to the active site. Mg(2+) is bound by residues Asp-11, Glu-71, and Asp-143.

This sequence belongs to the RuvC family. Homodimer which binds Holliday junction (HJ) DNA. The HJ becomes 2-fold symmetrical on binding to RuvC with unstacked arms; it has a different conformation from HJ DNA in complex with RuvA. In the full resolvosome a probable DNA-RuvA(4)-RuvB(12)-RuvC(2) complex forms which resolves the HJ. Mg(2+) is required as a cofactor.

The protein localises to the cytoplasm. The enzyme catalyses Endonucleolytic cleavage at a junction such as a reciprocal single-stranded crossover between two homologous DNA duplexes (Holliday junction).. In terms of biological role, the RuvA-RuvB-RuvC complex processes Holliday junction (HJ) DNA during genetic recombination and DNA repair. Endonuclease that resolves HJ intermediates. Cleaves cruciform DNA by making single-stranded nicks across the HJ at symmetrical positions within the homologous arms, yielding a 5'-phosphate and a 3'-hydroxyl group; requires a central core of homology in the junction. The consensus cleavage sequence is 5'-(A/T)TT(C/G)-3'. Cleavage occurs on the 3'-side of the TT dinucleotide at the point of strand exchange. HJ branch migration catalyzed by RuvA-RuvB allows RuvC to scan DNA until it finds its consensus sequence, where it cleaves and resolves the cruciform DNA. The sequence is that of Crossover junction endodeoxyribonuclease RuvC from Rhizobium etli (strain ATCC 51251 / DSM 11541 / JCM 21823 / NBRC 15573 / CFN 42).